The sequence spans 528 residues: Bifunctional purine biosynthesis protein PurH (528 aa).

In terms of domain architecture, MGS-like spans 1 to 146 (MAPTALLSVS…KNHDHVAVLT (146 aa)).

It belongs to the PurH family.

The catalysed reaction is (6R)-10-formyltetrahydrofolate + 5-amino-1-(5-phospho-beta-D-ribosyl)imidazole-4-carboxamide = 5-formamido-1-(5-phospho-D-ribosyl)imidazole-4-carboxamide + (6S)-5,6,7,8-tetrahydrofolate. It carries out the reaction IMP + H2O = 5-formamido-1-(5-phospho-D-ribosyl)imidazole-4-carboxamide. Its pathway is purine metabolism; IMP biosynthesis via de novo pathway; 5-formamido-1-(5-phospho-D-ribosyl)imidazole-4-carboxamide from 5-amino-1-(5-phospho-D-ribosyl)imidazole-4-carboxamide (10-formyl THF route): step 1/1. The protein operates within purine metabolism; IMP biosynthesis via de novo pathway; IMP from 5-formamido-1-(5-phospho-D-ribosyl)imidazole-4-carboxamide: step 1/1. The chain is Bifunctional purine biosynthesis protein PurH from Synechococcus sp. (strain WH7803).